The primary structure comprises 1064 residues: Leucine--tRNA ligase (1064 aa).

The disordered stretch occupies residues 1 to 25; the sequence is MARAMSETAEPGARTGAADTTVAPT. A 'HIGH' region motif is present at residues 106–117; sequence PYPSGSGLHVGH. The segment at 435–456 is disordered; the sequence is GRPGGGTEPADTAGPEAGADPA. Positions 831–835 match the 'KMSKS' region motif; it reads KMGKS. ATP is bound at residue Lys834.

This sequence belongs to the class-I aminoacyl-tRNA synthetase family.

The protein resides in the cytoplasm. The enzyme catalyses tRNA(Leu) + L-leucine + ATP = L-leucyl-tRNA(Leu) + AMP + diphosphate. In Frankia casuarinae (strain DSM 45818 / CECT 9043 / HFP020203 / CcI3), this protein is Leucine--tRNA ligase.